Here is a 275-residue protein sequence, read N- to C-terminus: Rhamnulose-1-phosphate aldolase (275 aa).

Glutamate 117 is a catalytic residue. 3 residues coordinate Zn(2+): histidine 141, histidine 143, and histidine 212.

This sequence belongs to the aldolase class II family. RhaD subfamily. As to quaternary structure, homotetramer. It depends on Zn(2+) as a cofactor.

It is found in the cytoplasm. The enzyme catalyses L-rhamnulose 1-phosphate = (S)-lactaldehyde + dihydroxyacetone phosphate. It participates in carbohydrate degradation; L-rhamnose degradation; glycerone phosphate from L-rhamnose: step 3/3. Functionally, catalyzes the reversible cleavage of L-rhamnulose-1-phosphate to dihydroxyacetone phosphate (DHAP) and L-lactaldehyde. This is Rhamnulose-1-phosphate aldolase from Citrobacter koseri (strain ATCC BAA-895 / CDC 4225-83 / SGSC4696).